The sequence spans 244 residues: Putative ABC transporter ATP-binding protein gll0289 (244 aa).

The region spanning 5 to 237 (LVVEELHYSY…RVLLETHGLE (233 aa)) is the ABC transporter domain. Position 38 to 45 (38 to 45 (GPNGSGKS)) interacts with ATP.

It belongs to the ABC transporter superfamily.

It is found in the cell inner membrane. In terms of biological role, probably part of an ABC transporter complex. Responsible for energy coupling to the transport system. This chain is Putative ABC transporter ATP-binding protein gll0289, found in Gloeobacter violaceus (strain ATCC 29082 / PCC 7421).